The chain runs to 257 residues: Homeobox protein EMX1 (257 aa).

The segment at residues 159–218 (PKRIRTAFSPSQLLRLERAFEKNHYVVGAERKQLAGSLSLSETQVKVWFQNRRTKYKRQK) is a DNA-binding region (homeobox). The disordered stretch occupies residues 216-257 (RQKLEEEGPESEQKKKGSHHINRWRIATKQANGEDIDVTSND). Positions 217 to 230 (QKLEEEGPESEQKK) are enriched in basic and acidic residues.

This sequence belongs to the EMX homeobox family. As to quaternary structure, interacts with WRD11 (via the N-terminal and the central portion of the protein); the interaction associates EMX1 with GLI3. Cerebral cortex. Expressed in the olfactory bulbs.

The protein localises to the nucleus. Transcription factor, which in cooperation with EMX2, acts to generate the boundary between the roof and archipallium in the developing brain. May function in combinations with OTX1/2 to specify cell fates in the developing central nervous system. The chain is Homeobox protein EMX1 (Emx1) from Mus musculus (Mouse).